The primary structure comprises 431 residues: Glutamate-1-semialdehyde 2,1-aminomutase (431 aa).

Lys-269 carries the post-translational modification N6-(pyridoxal phosphate)lysine.

Belongs to the class-III pyridoxal-phosphate-dependent aminotransferase family. HemL subfamily. Homodimer. Pyridoxal 5'-phosphate is required as a cofactor.

The protein localises to the cytoplasm. The enzyme catalyses (S)-4-amino-5-oxopentanoate = 5-aminolevulinate. The protein operates within porphyrin-containing compound metabolism; protoporphyrin-IX biosynthesis; 5-aminolevulinate from L-glutamyl-tRNA(Glu): step 2/2. Its pathway is porphyrin-containing compound metabolism; chlorophyll biosynthesis. In Chlorobium phaeobacteroides (strain DSM 266 / SMG 266 / 2430), this protein is Glutamate-1-semialdehyde 2,1-aminomutase.